The chain runs to 466 residues: Argininosuccinate lyase (466 aa).

This sequence belongs to the lyase 1 family. Argininosuccinate lyase subfamily.

The protein resides in the cytoplasm. The enzyme catalyses 2-(N(omega)-L-arginino)succinate = fumarate + L-arginine. It participates in amino-acid biosynthesis; L-arginine biosynthesis; L-arginine from L-ornithine and carbamoyl phosphate: step 3/3. In Roseobacter denitrificans (strain ATCC 33942 / OCh 114) (Erythrobacter sp. (strain OCh 114)), this protein is Argininosuccinate lyase.